The primary structure comprises 196 residues: Probable GTP-binding protein EngB (196 aa).

One can recognise an EngB-type G domain in the interval 21-195 (DVSEICLIGR…YELIDKLLGS (175 aa)). GTP is bound by residues 29–36 (GRSNVGKS), 56–60 (GKTRL), 75–78 (DAPG), 142–145 (TKLD), and 174–176 (ISN). The Mg(2+) site is built by Ser36 and Thr58.

Belongs to the TRAFAC class TrmE-Era-EngA-EngB-Septin-like GTPase superfamily. EngB GTPase family. Mg(2+) serves as cofactor.

Necessary for normal cell division and for the maintenance of normal septation. The protein is Probable GTP-binding protein EngB of Mycoplasma mycoides subsp. mycoides SC (strain CCUG 32753 / NCTC 10114 / PG1).